The primary structure comprises 326 residues: Phenylalanine--tRNA ligase alpha subunit (326 aa).

A Mg(2+)-binding site is contributed by glutamate 251.

Belongs to the class-II aminoacyl-tRNA synthetase family. Phe-tRNA synthetase alpha subunit type 1 subfamily. Tetramer of two alpha and two beta subunits. Mg(2+) is required as a cofactor.

Its subcellular location is the cytoplasm. It catalyses the reaction tRNA(Phe) + L-phenylalanine + ATP = L-phenylalanyl-tRNA(Phe) + AMP + diphosphate + H(+). This chain is Phenylalanine--tRNA ligase alpha subunit, found in Idiomarina loihiensis (strain ATCC BAA-735 / DSM 15497 / L2-TR).